The following is a 225-amino-acid chain: Thymidylate kinase (225 aa).

12-19 (GGEGAGKS) contributes to the ATP binding site.

It belongs to the thymidylate kinase family.

The catalysed reaction is dTMP + ATP = dTDP + ADP. Functionally, phosphorylation of dTMP to form dTDP in both de novo and salvage pathways of dTTP synthesis. In Chelativorans sp. (strain BNC1), this protein is Thymidylate kinase.